The following is a 34-amino-acid chain: Mu-theraphotoxin-Df1a (34 aa).

3 disulfides stabilise this stretch: Cys2-Cys16, Cys9-Cys21, and Cys15-Cys28. Phe34 bears the Phenylalanine amide mark.

It belongs to the neurotoxin 10 (Hwtx-1) family. 54 (ProTx-1) subfamily. In terms of processing, C-terminal amidation is important for the high potency of the toxin. In terms of tissue distribution, expressed by the venom gland.

It localises to the secreted. Its function is as follows. Inhibits sodium channel Nav1.7/SCN9A with high potency (IC(50)=117 nM) and Nav1.2/SCN2A, Nav1.3/SCN3A, Nav1.6/SCN8A and Nav1.5/SCN5 with weaker potency. Also inhibits voltage-gated calcium channel Cav3.1/CACNA1G, Cav3.2/CACNA1H and Cav3.3/CACNA1I. In Davus fasciatus (Costa Rican tiger rump), this protein is Mu-theraphotoxin-Df1a.